The following is a 430-amino-acid chain: Phosphoserine aminotransferase 1, chloroplastic (430 aa).

Residues 1-51 (MAATTNSFLVGSNNTQIPALKPKSSSQSFLHLSKPNTVNFVSKTKPVAVRC) constitute a chloroplast transit peptide. Val52 carries the N-acetylvaline modification. Arg111 contributes to the L-glutamate binding site. Residues 145–146 (AT), Trp171, Thr221, Asp241, and Gln264 each bind pyridoxal 5'-phosphate. Lys265 bears the N6-(pyridoxal phosphate)lysine mark. 306–307 (NT) lines the pyridoxal 5'-phosphate pocket.

This sequence belongs to the class-V pyridoxal-phosphate-dependent aminotransferase family. SerC subfamily. As to quaternary structure, homodimer. The cofactor is pyridoxal 5'-phosphate. Ubiquitous, but expressed preferentially in light-grown roots and shoots. Detected in root meristems and in root tissues surrounding the vascular bundle.

The protein localises to the plastid. The protein resides in the chloroplast. It carries out the reaction O-phospho-L-serine + 2-oxoglutarate = 3-phosphooxypyruvate + L-glutamate. It catalyses the reaction 4-(phosphooxy)-L-threonine + 2-oxoglutarate = (R)-3-hydroxy-2-oxo-4-phosphooxybutanoate + L-glutamate. Its pathway is amino-acid biosynthesis; L-serine biosynthesis; L-serine from 3-phospho-D-glycerate: step 2/3. It participates in cofactor biosynthesis; pyridoxine 5'-phosphate biosynthesis; pyridoxine 5'-phosphate from D-erythrose 4-phosphate: step 3/5. Its activity is regulated as follows. Inhibited by high concentration of cysteine and by 3-phosphonooxypyruvate. Not inhibited by serine, threonine, valine, glycine, tryptophan and O-acetyl-L-serine. In terms of biological role, involved in the plastidial phosphorylated pathway of serine biosynthesis (PPSB). Catalyzes the reversible conversion of 3-phosphohydroxypyruvate to phosphoserine. This chain is Phosphoserine aminotransferase 1, chloroplastic, found in Arabidopsis thaliana (Mouse-ear cress).